The sequence spans 87 residues: Putative defensin-like protein 235 (87 aa).

Residues 1-26 (MRSATFFLVSCVLMSFVLSHVKEVEA) form the signal peptide. 3 cysteine pairs are disulfide-bonded: cysteine 46/cysteine 73, cysteine 54/cysteine 82, and cysteine 71/cysteine 84.

The protein belongs to the DEFL family.

The protein localises to the secreted. The protein is Putative defensin-like protein 235 (SCRL26) of Arabidopsis thaliana (Mouse-ear cress).